The primary structure comprises 42 residues: MSNTGTTGRVPLWFVGMIVGLAALGLLGIFFYGSYTGLGSSL.

Residues 12–32 traverse the membrane as a helical segment; that stretch reads LWFVGMIVGLAALGLLGIFFY.

This sequence belongs to the PsbJ family. PSII is composed of 1 copy each of membrane proteins PsbA, PsbB, PsbC, PsbD, PsbE, PsbF, PsbH, PsbI, PsbJ, PsbK, PsbL, PsbM, PsbT, PsbX, PsbY, PsbZ, Psb30/Ycf12, at least 3 peripheral proteins of the oxygen-evolving complex and a large number of cofactors. It forms dimeric complexes.

The protein resides in the plastid. Its subcellular location is the chloroplast thylakoid membrane. In terms of biological role, one of the components of the core complex of photosystem II (PSII). PSII is a light-driven water:plastoquinone oxidoreductase that uses light energy to abstract electrons from H(2)O, generating O(2) and a proton gradient subsequently used for ATP formation. It consists of a core antenna complex that captures photons, and an electron transfer chain that converts photonic excitation into a charge separation. The protein is Photosystem II reaction center protein J of Nephroselmis olivacea (Green alga).